Consider the following 496-residue polypeptide: Probable histidine ammonia-lyase (496 aa).

Residues 141 to 143 constitute a cross-link (5-imidazolinone (Ala-Gly)); the sequence is ASG. A 2,3-didehydroalanine (Ser) modification is found at Ser-142.

This sequence belongs to the PAL/histidase family. In terms of processing, contains an active site 4-methylidene-imidazol-5-one (MIO), which is formed autocatalytically by cyclization and dehydration of residues Ala-Ser-Gly.

It localises to the cytoplasm. It catalyses the reaction L-histidine = trans-urocanate + NH4(+). It participates in amino-acid degradation; L-histidine degradation into L-glutamate; N-formimidoyl-L-glutamate from L-histidine: step 1/3. The chain is Probable histidine ammonia-lyase from Thermoplasma acidophilum (strain ATCC 25905 / DSM 1728 / JCM 9062 / NBRC 15155 / AMRC-C165).